A 744-amino-acid chain; its full sequence is MASEGTNIPSPVVRQIDKQFLICSICLERYKNPKVLPCLHTFCERCLQNYIPAHSLTLSCPVCRQTSILPEKGVAALQNNFFITNLMDVLQRTPGSNVEESSILETVTAVAAGKPLSCPNHDGNVMEFYCQSCETAMCRECTEGEHAEHPTVPLKDVVEQHKASLQVQLDAVNKRLPEIDSALQFISEIIHQLTNQKASIVDDIHSTFDELQKTLNVRKSVLLMELEVNYGVKHKVLQSQLDTLLQGQESIKSCSNFTAQALNHGTETEVLLVKKQMSEKLNELADQDFPLHPRENDQLDFIVETEGLKKSIHNLGTILTTNAVASETVATGEGLRQTIIGQPMSVTITTKDKDGELCKTGNAYLTAELSTPDGSVADGEILDNKNGTYEFLYTVQKEGDFTLSLRLYDQHIRGSPFKLKVIRSADVSPTTEGVKRRVKSPGSGHVKQKAVKRPASMYSTGKRKENPIEDDLIFRVGTKGRNKGEFTNLQGVAASTSGKILIADSNNQCVQIFSNDGQFKSRFGIRGRSPGQLQRPTGVAVHPSGDIIIADYDNKWVSIFSSDGKFKTKIGSGKLMGPKGVSVDRNGHIIVVDNKACCVFIFQPNGKIVTRFGSRGNGDRQFAGPHFAAVNSNNEIIITDFHNHSVKVFNQEGEFMLKFGSNGEGNGQFNAPTGVAVDSNGNIIVADWGNSRIQVFDGSGSFLSYINTSADPLYGPQGLALTSDGHVVVADSGNHCFKVYRYLQ.

A Phosphoserine modification is found at Ser-10. An RING-type zinc finger spans residues 23–64 (CSICLERYKNPKVLPCLHTFCERCLQNYIPAHSLTLSCPVCR). The segment at 113–154 (GKPLSCPNHDGNVMEFYCQSCETAMCRECTEGEHAEHPTVPL) adopts a B box-type zinc-finger fold. Zn(2+)-binding residues include Cys-118, His-121, Cys-141, and His-146. A Filamin repeat occupies 320–421 (TTNAVASETV…IRGSPFKLKV (102 aa)). Thr-371 is modified (phosphothreonine). Ser-375, Ser-424, and Ser-428 each carry phosphoserine. Positions 432–462 (EGVKRRVKSPGSGHVKQKAVKRPASMYSTGK) are disordered. NHL repeat units lie at residues 473-516 (IFRV…FSND), 520-563 (KSRF…FSSD), 564-605 (GKFK…FQPN), 609-652 (VTRF…FNQE), 656-699 (MLKF…FDGS), and 700-743 (GSFL…YRYL).

This sequence belongs to the TRIM/RBCC family. In terms of assembly, forms homooligomers. Interacts with TRIM3; this interaction reduces TRIM2 activity. Interacts with myosin V; myosin V may not be a substrate for ubiquitination. Interacts with NEFL. Interacts with phosphorylated BCL2L11. Interacts with SIRPA. RING-type zinc finger-dependent and UBE2D1-dependent autoubiquitination.

It is found in the cytoplasm. The enzyme catalyses S-ubiquitinyl-[E2 ubiquitin-conjugating enzyme]-L-cysteine + [acceptor protein]-L-lysine = [E2 ubiquitin-conjugating enzyme]-L-cysteine + N(6)-ubiquitinyl-[acceptor protein]-L-lysine.. The protein operates within protein modification; protein ubiquitination. In terms of biological role, UBE2D1-dependent E3 ubiquitin-protein ligase that mediates the ubiquitination of NEFL and of phosphorylated BCL2L11. Plays a neuroprotective function. May play a role in neuronal rapid ischemic tolerance. Plays a role in antiviral immunity and limits New World arenavirus infection independently of its ubiquitin ligase activity. This chain is Tripartite motif-containing protein 2 (TRIM2), found in Callithrix jacchus (White-tufted-ear marmoset).